We begin with the raw amino-acid sequence, 431 residues long: Gamma-glutamyl phosphate reductase (431 aa).

It belongs to the gamma-glutamyl phosphate reductase family.

Its subcellular location is the cytoplasm. It catalyses the reaction L-glutamate 5-semialdehyde + phosphate + NADP(+) = L-glutamyl 5-phosphate + NADPH + H(+). The protein operates within amino-acid biosynthesis; L-proline biosynthesis; L-glutamate 5-semialdehyde from L-glutamate: step 2/2. Functionally, catalyzes the NADPH-dependent reduction of L-glutamate 5-phosphate into L-glutamate 5-semialdehyde and phosphate. The product spontaneously undergoes cyclization to form 1-pyrroline-5-carboxylate. The chain is Gamma-glutamyl phosphate reductase from Bifidobacterium longum subsp. infantis (strain ATCC 15697 / DSM 20088 / JCM 1222 / NCTC 11817 / S12).